The chain runs to 154 residues: MNATILGQAIAFVIFVWFCMKYVWPPLMAAIEKRQKEISDGLASAERAKKDLDLAQANATDQLKKAKAEAQVIIEQANKRRSQILDEAKAEAEQERTKIVAQAQAEIDAERKRAREELRKQVAILAVAGAEKIIERSVDEAANSDIVDKLVAEL.

The helical transmembrane segment at 9-29 (AIAFVIFVWFCMKYVWPPLMA) threads the bilayer.

This sequence belongs to the ATPase B chain family. As to quaternary structure, F-type ATPases have 2 components, F(1) - the catalytic core - and F(0) - the membrane proton channel. F(1) has five subunits: alpha(3), beta(3), gamma(1), delta(1), epsilon(1). F(0) has three main subunits: a(1), b(2) and c(10-14). The alpha and beta chains form an alternating ring which encloses part of the gamma chain. F(1) is attached to F(0) by a central stalk formed by the gamma and epsilon chains, while a peripheral stalk is formed by the delta and b chains.

It is found in the cell inner membrane. Its function is as follows. F(1)F(0) ATP synthase produces ATP from ADP in the presence of a proton or sodium gradient. F-type ATPases consist of two structural domains, F(1) containing the extramembraneous catalytic core and F(0) containing the membrane proton channel, linked together by a central stalk and a peripheral stalk. During catalysis, ATP synthesis in the catalytic domain of F(1) is coupled via a rotary mechanism of the central stalk subunits to proton translocation. In terms of biological role, component of the F(0) channel, it forms part of the peripheral stalk, linking F(1) to F(0). The sequence is that of ATP synthase subunit b from Klebsiella pneumoniae subsp. pneumoniae (strain ATCC 700721 / MGH 78578).